Reading from the N-terminus, the 423-residue chain is Gamma-glutamyl phosphate reductase (423 aa).

Belongs to the gamma-glutamyl phosphate reductase family.

The protein localises to the cytoplasm. The catalysed reaction is L-glutamate 5-semialdehyde + phosphate + NADP(+) = L-glutamyl 5-phosphate + NADPH + H(+). It functions in the pathway amino-acid biosynthesis; L-proline biosynthesis; L-glutamate 5-semialdehyde from L-glutamate: step 2/2. In terms of biological role, catalyzes the NADPH-dependent reduction of L-glutamate 5-phosphate into L-glutamate 5-semialdehyde and phosphate. The product spontaneously undergoes cyclization to form 1-pyrroline-5-carboxylate. The protein is Gamma-glutamyl phosphate reductase of Brucella suis (strain ATCC 23445 / NCTC 10510).